Here is a 465-residue protein sequence, read N- to C-terminus: Trigger factor (465 aa).

A PPIase FKBP-type domain is found at Gly163 to Ala248. The interval Glu431 to Lys465 is disordered. Basic and acidic residues predominate over residues Glu443 to Lys465.

The protein belongs to the FKBP-type PPIase family. Tig subfamily.

Its subcellular location is the cytoplasm. The catalysed reaction is [protein]-peptidylproline (omega=180) = [protein]-peptidylproline (omega=0). Its function is as follows. Involved in protein export. Acts as a chaperone by maintaining the newly synthesized protein in an open conformation. Functions as a peptidyl-prolyl cis-trans isomerase. The polypeptide is Trigger factor (Mesomycoplasma hyopneumoniae (strain J / ATCC 25934 / NCTC 10110) (Mycoplasma hyopneumoniae)).